Consider the following 977-residue polypeptide: AP-2 complex subunit alpha-1 (977 aa).

The tract at residues 614–702 (AKLKRKKGPG…PSLGPTPEEA (89 aa)) is disordered. 2 positions are modified to phosphoserine: Ser-626 and Ser-652. Low complexity predominate over residues 646–657 (PTPSTVSTPSPS). Position 653 is a phosphothreonine (Thr-653). Phosphoserine is present on Ser-655. Residues 666–675 (APPPAAPPAP) are compositionally biased toward pro residues.

The protein belongs to the adaptor complexes large subunit family. As to quaternary structure, adaptor protein complex 2 (AP-2) is a heterotetramer composed of two large adaptins (alpha-type subunit AP2A1 or AP2A2 and beta-type subunit AP2B1), a medium adaptin (mu-type subunit AP2M1) and a small adaptin (sigma-type subunit AP2S1). Interacts with HIP1 and RAB11FIP2. Interacts with SLC12A5. Interacts with clathrin. Interacts with SGIP1. Interacts with RFTN1. Interacts with KIAA1107. Interacts with PICALM. Together with AP2B1 and AP2M1, it interacts with ADAM10; this interaction facilitates ADAM10 endocytosis from the plasma membrane during long-term potentiation in hippocampal neurons. Interacts with ABCB11; this interaction regulates cell membrane expression of ABCB11 through its internalization in a clathrin-dependent manner and its subsequent degradation. Probably interacts with ACE2 (via endocytic sorting signal motif); the interaction is inhibited by ACE2 phosphorylation. As to expression, expressed in the brain (at protein level). Isoform A: Expressed only in neuronal tissue and skeletal muscle. Isoform B: Widely expressed.

The protein resides in the cell membrane. The protein localises to the membrane. It localises to the coated pit. Component of the adaptor protein complex 2 (AP-2). Adaptor protein complexes function in protein transport via transport vesicles in different membrane traffic pathways. Adaptor protein complexes are vesicle coat components and appear to be involved in cargo selection and vesicle formation. AP-2 is involved in clathrin-dependent endocytosis in which cargo proteins are incorporated into vesicles surrounded by clathrin (clathrin-coated vesicles, CCVs) which are destined for fusion with the early endosome. The clathrin lattice serves as a mechanical scaffold but is itself unable to bind directly to membrane components. Clathrin-associated adaptor protein (AP) complexes which can bind directly to both the clathrin lattice and to the lipid and protein components of membranes are considered to be the major clathrin adaptors contributing the CCV formation. AP-2 also serves as a cargo receptor to selectively sort the membrane proteins involved in receptor-mediated endocytosis. AP-2 seems to play a role in the recycling of synaptic vesicle membranes from the presynaptic surface. AP-2 recognizes Y-X-X-[FILMV] (Y-X-X-Phi) and [ED]-X-X-X-L-[LI] endocytosis signal motifs within the cytosolic tails of transmembrane cargo molecules. AP-2 may also play a role in maintaining normal post-endocytic trafficking through the ARF6-regulated, non-clathrin pathway. The AP-2 alpha subunit binds polyphosphoinositide-containing lipids, positioning AP-2 on the membrane. During long-term potentiation in hippocampal neurons, AP-2 is responsible for the endocytosis of ADAM10. The AP-2 alpha subunit acts via its C-terminal appendage domain as a scaffolding platform for endocytic accessory proteins. The AP-2 alpha and AP-2 sigma subunits are thought to contribute to the recognition of the [ED]-X-X-X-L-[LI] motif. The sequence is that of AP-2 complex subunit alpha-1 (Ap2a1) from Mus musculus (Mouse).